A 631-amino-acid polypeptide reads, in one-letter code: Phosphomethylpyrimidine synthase (631 aa).

Substrate contacts are provided by residues Asn-239, Met-268, Tyr-297, His-333, 353 to 355 (SRG), 394 to 397 (DGLR), and Glu-433. His-437 provides a ligand contact to Zn(2+). Tyr-460 contacts substrate. His-501 is a binding site for Zn(2+). Residues Cys-581, Cys-584, and Cys-589 each coordinate [4Fe-4S] cluster.

It belongs to the ThiC family. In terms of assembly, homodimer. [4Fe-4S] cluster is required as a cofactor.

The enzyme catalyses 5-amino-1-(5-phospho-beta-D-ribosyl)imidazole + S-adenosyl-L-methionine = 4-amino-2-methyl-5-(phosphooxymethyl)pyrimidine + CO + 5'-deoxyadenosine + formate + L-methionine + 3 H(+). It functions in the pathway cofactor biosynthesis; thiamine diphosphate biosynthesis. Functionally, catalyzes the synthesis of the hydroxymethylpyrimidine phosphate (HMP-P) moiety of thiamine from aminoimidazole ribotide (AIR) in a radical S-adenosyl-L-methionine (SAM)-dependent reaction. The protein is Phosphomethylpyrimidine synthase of Salmonella agona (strain SL483).